The chain runs to 408 residues: CinA-like protein (408 aa).

The protein belongs to the CinA family.

The sequence is that of CinA-like protein from Thermotoga neapolitana (strain ATCC 49049 / DSM 4359 / NBRC 107923 / NS-E).